Reading from the N-terminus, the 872-residue chain is MNLILKFRRSFRTLIVLLATFCLVSILISAYFLYSGYKQEMTLIETTAEAECADIKDLPYRSIELRTIKPIDTSKTDPTVLLFVESQYSQLGQDIIAILESSRFQYQMVIAPGKGDIPPLTDSGKGKYTLIIYENILKYVSMDSWNRELLEKYCIEYSVSIIGFHKANENSLPTTQLKGFPLNLFNNVALKDCSVNPQSPLLHITKGPKVEKGPLPGEDWTIFQYNHSTYQPVLLTELQSEKSLSFLSSQTLYATIIQDLGLHDGIQRVLFGNNLNFWLHKLIFIDAISFLSGKRLTLSLDRYILVDIDDIFVGKEGTRMNVKDVKALLETQNLLRTQVANFTFNLGFSGKFYHTGTEEEDEGDDLLLRSVDEFWWFPHMWSHMQPHLFHNESSLVEQMILNKEFALEHGIPINLGYAVAPHHSGVYPVHIQLYAAWKKVWGIQVTSTEEYPHLKPARYRKGFIHNSIMVLPRQTCGLFTHTIFYKEYPGGPQELDKSIKGGELFLTILLNPISIFMTHLSNYGNDRLGLYTFVNLANFVHSWTNLKLQTLPPVQLAHKYFELFPEQKDPLWQNPCDDKRHKDIWSREKTCDHLPKFLVIGPQKTGTTALYLFLLMHPSIISNLPSPKTFEEVQFFNGNNYHKGIEWYMDFFPTPSNITSDFLFEKSANYFHSEEAPKRAASLVPKAKIITILIDPSDRAYSWYQHQRSHEDPAALRFNFYEVITTGHWAPPDLKTLQRRCLVPGWYAVHIERWLAYFSTSQLLIIDGQQLRSDPATVMDEVQKFLGVTPHYNYSEALTFDPQKGFWCQLLEGGKTKCLGKSKGRKYPPMDSESRTFLSSYYRDHNVELSKLLHRLGQPLPSWLRQELQKVR.

Over 1-13 the chain is Cytoplasmic; sequence MNLILKFRRSFRT. The helical; Signal-anchor for type II membrane protein transmembrane segment at 14 to 34 threads the bilayer; it reads LIVLLATFCLVSILISAYFLY. At 35-872 the chain is on the lumenal side; the sequence is SGYKQEMTLI…WLRQELQKVR (838 aa). The tract at residues 36 to 588 is heparan sulfate N-deacetylase 4; it reads GYKQEMTLIE…KRHKDIWSRE (553 aa). Residues asparagine 226, asparagine 341, and asparagine 391 are each glycosylated (N-linked (GlcNAc...) asparagine). A heparan sulfate N-sulfotransferase 4 region spans residues 589–872; it reads KTCDHLPKFL…WLRQELQKVR (284 aa). The For sulfotransferase activity role is filled by lysine 604. 604-608 serves as a coordination point for 3'-phosphoadenylyl sulfate; that stretch reads KTGTT. An N-linked (GlcNAc...) asparagine glycan is attached at asparagine 657. Serine 702 lines the 3'-phosphoadenylyl sulfate pocket. N-linked (GlcNAc...) asparagine glycosylation is present at asparagine 793. A disulfide bridge links cysteine 808 with cysteine 818. 823 to 827 contacts 3'-phosphoadenylyl sulfate; it reads KGRKY.

The protein belongs to the sulfotransferase 1 family. NDST subfamily. In terms of assembly, monomer. In terms of tissue distribution, expressed at low level in brain and throughout embryogenesis. Not expressed in other tissues.

Its subcellular location is the golgi apparatus membrane. The catalysed reaction is alpha-D-glucosaminyl-[heparan sulfate](n) + 3'-phosphoadenylyl sulfate = N-sulfo-alpha-D-glucosaminyl-[heparan sulfate](n) + adenosine 3',5'-bisphosphate + 2 H(+). It functions in the pathway glycan metabolism; heparan sulfate biosynthesis. It participates in glycan metabolism; heparin biosynthesis. Functionally, essential bifunctional enzyme that catalyzes both the N-deacetylation and the N-sulfation of glucosamine (GlcNAc) of the glycosaminoglycan in heparan sulfate. Modifies the GlcNAc-GlcA disaccharide repeating sugar backbone to make N-sulfated heparosan, a prerequisite substrate for later modifications in heparin biosynthesis. Has low deacetylase activity but high sulfotransferase activity. The chain is Bifunctional heparan sulfate N-deacetylase/N-sulfotransferase 4 (Ndst4) from Mus musculus (Mouse).